Here is a 391-residue protein sequence, read N- to C-terminus: 8-amino-7-oxononanoate synthase (391 aa).

Arg-19 lines the substrate pocket. Pyridoxal 5'-phosphate is bound at residue 106-107 (GY). Residue His-131 participates in substrate binding. Positions 178, 206, and 234 each coordinate pyridoxal 5'-phosphate. Lys-237 carries the post-translational modification N6-(pyridoxal phosphate)lysine. Thr-353 contacts substrate.

It belongs to the class-II pyridoxal-phosphate-dependent aminotransferase family. BioF subfamily. Homodimer. It depends on pyridoxal 5'-phosphate as a cofactor.

It catalyses the reaction 6-carboxyhexanoyl-[ACP] + L-alanine + H(+) = (8S)-8-amino-7-oxononanoate + holo-[ACP] + CO2. The protein operates within cofactor biosynthesis; biotin biosynthesis. In terms of biological role, catalyzes the decarboxylative condensation of pimeloyl-[acyl-carrier protein] and L-alanine to produce 8-amino-7-oxononanoate (AON), [acyl-carrier protein], and carbon dioxide. The polypeptide is 8-amino-7-oxononanoate synthase (Geobacter metallireducens (strain ATCC 53774 / DSM 7210 / GS-15)).